Consider the following 837-residue polypeptide: MNLISKISPQNRILNRARLIAEEVLKKEEEYEHFSDQELINKSDDIIEYLANNNPLDDKLVEALCIIREVIYRVHNKRAFKVQIIGAIIVYFGDFAEMMTGEGKTLTLVLVAYLNALYKKGVHMVTVNEYLVKVGAEFATPVLNFLNMSVGQITANMNEYEKRNNYNCDITYTTNSELGFDYLRDNMVTNYANKVQRGLWFAIVDEGDSVLIDEARTPLIISGEPQEEIGNYVKADRFVKTLYPQDFTLDPESQSVALTESGVEKAQKFFNTKNYYNFENSDIIHKVTNALRANFTFFNGREYIVKKDDDGEDIIALVDQSTGRIMEGRSYSAGLQQAIQAKEQIKIEPENLTVATITYQSLFRLYKKLAAVSGTAITEAEEFLNIYNMVVVTIPTNKPIKRIDHPDYVFDNKRTKWKYVIADVIRRHENGQPILIGTASVEDSEILHQLLERVNIPHEVLNAKNHAREAEIIACAGEYKAVTIATNMAGRGTDIKLSPESLEAGGLCVIGTERSDSRRIDNQLRGRAGRQGDIGESRFFISMEDTLFSRFATDNLAKADDKLSEDVISTKFFTRLLNNTQKKVESLNYDTRKNLIDYDHVLSNQRELIYKQRDKILISSDNKDILYRMLDSVIDDLIYQSHNKPNEDIIDIKKLIDLATQNIFYDNYLNQDEYYGLKFEQIKTKLKKDCINFFEQKEQLMTPTIFNQILSEIMISNIDEEWTKHLDITSKIREGVNLRAYEQKAPLNIYVEDSDKLFEKLKHNVAWKTVCSIGKINYVHQDYSDLNSEFIVNDNEINENNNSIDFENFNESIPTDQTIQESFDDNQSDNEDDKNNN.

ATP is bound by residues glutamine 83, glycine 101–threonine 105, and aspartate 494.

This sequence belongs to the SecA family. As to quaternary structure, monomer and homodimer. Part of the essential Sec protein translocation apparatus which comprises SecA, SecYEG and auxiliary proteins SecDF. Other proteins may also be involved.

Its subcellular location is the cell membrane. The protein resides in the cytoplasm. It catalyses the reaction ATP + H2O + cellular proteinSide 1 = ADP + phosphate + cellular proteinSide 2.. In terms of biological role, part of the Sec protein translocase complex. Interacts with the SecYEG preprotein conducting channel. Has a central role in coupling the hydrolysis of ATP to the transfer of proteins into and across the cell membrane, serving as an ATP-driven molecular motor driving the stepwise translocation of polypeptide chains across the membrane. This chain is Protein translocase subunit SecA, found in Ureaplasma parvum serovar 3 (strain ATCC 27815 / 27 / NCTC 11736).